The chain runs to 480 residues: Proline--tRNA ligase (480 aa).

This sequence belongs to the class-II aminoacyl-tRNA synthetase family. ProS type 3 subfamily. As to quaternary structure, homodimer.

It is found in the cytoplasm. The enzyme catalyses tRNA(Pro) + L-proline + ATP = L-prolyl-tRNA(Pro) + AMP + diphosphate. Its function is as follows. Catalyzes the attachment of proline to tRNA(Pro) in a two-step reaction: proline is first activated by ATP to form Pro-AMP and then transferred to the acceptor end of tRNA(Pro). The polypeptide is Proline--tRNA ligase (Mycobacterium leprae (strain Br4923)).